The following is a 671-amino-acid chain: cGMP-dependent protein kinase 1 (671 aa).

Position 2 is an N-acetylserine (S2). A coiled-coil region spans residues 2–59 (SELEEDFAKILMLKEERIKELEKRLSEKEEEIQELKRKLHKCQSVLPVPSTHIGPRTT). A required for dimerization region spans residues 2-102 (SELEEDFAKI…LIKEAILDND (101 aa)). Residues 9–44 (AKILMLKEERIKELEKRLSEKEEEIQELKRKLHKCQ) form a leucine-zipper region. Positions 50–75 (PSTHIGPRTTRAQGISAEPQTYRSFH) are autoinhibitory domain. The residue at position 59 (T59) is a Phosphothreonine; by autocatalysis. Residues 103-220 (FMKNLELSQI…EYMEFLKSVP (118 aa)) form a cGMP-binding, high affinity region. Residues 167–170 (GELA) and 177–178 (RT) each bind 3',5'-cyclic AMP. 3',5'-cyclic GMP-binding positions include 167–170 (GELA), 177–178 (RT), R282, 291–294 (GEKA), 301–302 (RT), and Y336. The cGMP-binding, low affinity stretch occupies residues 221–341 (TFQSLPEEIL…SNKAYEDAEA (121 aa)). Residues 291 to 294 (GEKA), 301 to 302 (RT), and Y336 contribute to the 3',5'-cyclic AMP site. Positions 360-619 (FNIIDTLGVG…VKDIQKHKWF (260 aa)) constitute a Protein kinase domain. ATP contacts are provided by residues 366-374 (LGVGGFGRV) and K390. The active-site Proton acceptor is the D484. T515 bears the Phosphothreonine mark. The region spanning 620–671 (EGFNWEGLRKGTLTPPIIPSVASPTDTSNFDSFPEDNDEPPPDDNSGWDIDF) is the AGC-kinase C-terminal domain. Positions 635–671 (PIIPSVASPTDTSNFDSFPEDNDEPPPDDNSGWDIDF) are disordered. Residues 652–661 (FPEDNDEPPP) are compositionally biased toward acidic residues.

Belongs to the protein kinase superfamily. AGC Ser/Thr protein kinase family. cGMP subfamily. In terms of assembly, isoform alpha: parallel homodimer or heterodimer and also heterotetramer. Interacts directly with PPP1R12A. Non-covalent dimer of dimer of PRKG1-PRKG1 and PPP1R12A-PPP1R12A. This interaction targets PRKG1 to stress fibers to mediate smooth muscle cell relaxation and vasodilation in responses to rises in cGMP. Isoform beta: antiparallel homodimer. Part of cGMP kinase signaling complex at least composed of ACTA2/alpha-actin, CNN1/calponin H1, PLN/phospholamban, PRKG1 and ITPR1. Interacts with IRAG1. Forms a stable complex with ITPR1, IRAG1, and isoform beta of PRKG1. Interacts with TRPC7 (via ankyrin repeat domain). Isoform alpha interacts with RGS2. Interacts with GTF2I. In terms of processing, autophosphorylation increases kinase activity. Post-translationally, 65 kDa monomer is produced by proteolytic cleavage. As to expression, primarily expressed in lung and placenta.

It localises to the cytoplasm. It catalyses the reaction L-seryl-[protein] + ATP = O-phospho-L-seryl-[protein] + ADP + H(+). The catalysed reaction is L-threonyl-[protein] + ATP = O-phospho-L-threonyl-[protein] + ADP + H(+). In the absence of cGMP, PRKG1 activity is suppressed by autoinhibitory contacts. Serine/threonine protein kinase that acts as a key mediator of the nitric oxide (NO)/cGMP signaling pathway. GMP binding activates PRKG1, which phosphorylates serines and threonines on many cellular proteins. Numerous protein targets for PRKG1 phosphorylation are implicated in modulating cellular calcium, but the contribution of each of these targets may vary substantially among cell types. Proteins that are phosphorylated by PRKG1 regulate platelet activation and adhesion, smooth muscle contraction, cardiac function, gene expression, feedback of the NO-signaling pathway, and other processes involved in several aspects of the CNS like axon guidance, hippocampal and cerebellar learning, circadian rhythm and nociception. Smooth muscle relaxation is mediated through lowering of intracellular free calcium, by desensitization of contractile proteins to calcium, and by decrease in the contractile state of smooth muscle or in platelet activation. Regulates intracellular calcium levels via several pathways: phosphorylates IRAG1 and inhibits IP3-induced Ca(2+) release from intracellular stores, phosphorylation of KCNMA1 (BKCa) channels decreases intracellular Ca(2+) levels, which leads to increased opening of this channel. PRKG1 phosphorylates the canonical transient receptor potential channel (TRPC) family which inactivates the associated inward calcium current. Another mode of action of NO/cGMP/PKGI signaling involves PKGI-mediated inactivation of the Ras homolog gene family member A (RhoA). Phosphorylation of RHOA by PRKG1 blocks the action of this protein in myriad processes: regulation of RHOA translocation; decreasing contraction; controlling vesicle trafficking, reduction of myosin light chain phosphorylation resulting in vasorelaxation. Activation of PRKG1 by NO signaling also alters gene expression in a number of tissues. In smooth muscle cells, increased cGMP and PRKG1 activity influence expression of smooth muscle-specific contractile proteins, levels of proteins in the NO/cGMP signaling pathway, down-regulation of the matrix proteins osteopontin and thrombospondin-1 to limit smooth muscle cell migration and phenotype. Regulates vasodilator-stimulated phosphoprotein (VASP) functions in platelets and smooth muscle. The chain is cGMP-dependent protein kinase 1 (PRKG1) from Homo sapiens (Human).